Here is a 148-residue protein sequence, read N- to C-terminus: MPSRLRKTRKLRGHVSHGHGRIGKHRKHPGGRGNAGGMHHHRINFDKYHPGYFGKVGMRHYHLKRNQSFCPTVNLDKLWTLVSEQTRVNAAKNKNGVAPIIDVVRSGYYKVLGKGKLPKQPVIVKAKFFSRRAEEKIKGVGGACVLVA.

Positions 1-30 are enriched in basic residues; that stretch reads MPSRLRKTRKLRGHVSHGHGRIGKHRKHPG. Residues 1–37 are disordered; the sequence is MPSRLRKTRKLRGHVSHGHGRIGKHRKHPGGRGNAGG. Histidine 39 carries the post-translational modification (3S)-3-hydroxyhistidine. N6-acetyllysine is present on residues lysine 47 and lysine 55. Phosphoserine is present on serine 68. The residue at position 110 (lysine 110) is an N6-acetyllysine.

The protein belongs to the universal ribosomal protein uL15 family. In terms of assembly, component of the large ribosomal subunit. Hydroxylated on His-39 by MINA.

Its subcellular location is the cytoplasm. Component of the large ribosomal subunit. The ribosome is a large ribonucleoprotein complex responsible for the synthesis of proteins in the cell. The protein is Large ribosomal subunit protein uL15 (Rpl27a) of Rattus norvegicus (Rat).